We begin with the raw amino-acid sequence, 508 residues long: MGLPWYRVHTVVLNDPGRLLSVHIMHTALVSGWAGSMALYELAVFDPSDPVLDPMWRQGMFVIPFMTRLGITNSWGGWSITGGTITNPGIWSYEGVAGAHIVFSGLCFLAAIWHWVYWDLEIFCDERTGKPSLDLPKIFGIHLFLSGVACFGFGAFHVTGLYGPGIWVSDPYGLTGKVQSVNPAWGAEGFDPFVPGGIASHHIAAGTLGILAGLFHLSVRPPQRLYKGLRMGNIETVLSSSIAAVFFAAFVVAGTMWYGSATTPIELFGPTRYQWDQGYFQQEIYRRVGTGLAENLSLSEAWSKIPDKLAFYDYIGNNPAKGGLFRAGSMDNGDGIAVGWLGHPIFRDKDGHELFVRRMPTFFETFPVVLVDGDGIVRADVPFRRAESKYSVEQVGVTVEFYGGELNGVSYGDPATVKKYARRAQLGEIFELDRATLKSDGVFRSSPRGWFTFGHASFALLFFFGHIWHGARTLFRDVFAGIDPDLDAQVEFGAFQKLGDPTTRRQVV.

The next 6 helical transmembrane spans lie at serine 21–serine 36, isoleucine 101–tryptophan 115, glycine 140–phenylalanine 156, isoleucine 203–serine 218, valine 237–valine 252, and serine 457–arginine 472.

It belongs to the PsbB/PsbC family. PsbB subfamily. As to quaternary structure, PSII is composed of 1 copy each of membrane proteins PsbA, PsbB, PsbC, PsbD, PsbE, PsbF, PsbH, PsbI, PsbJ, PsbK, PsbL, PsbM, PsbT, PsbX, PsbY, PsbZ, Psb30/Ycf12, at least 3 peripheral proteins of the oxygen-evolving complex and a large number of cofactors. It forms dimeric complexes. The cofactor is Binds multiple chlorophylls. PSII binds additional chlorophylls, carotenoids and specific lipids..

Its subcellular location is the plastid. It is found in the chloroplast thylakoid membrane. In terms of biological role, one of the components of the core complex of photosystem II (PSII). It binds chlorophyll and helps catalyze the primary light-induced photochemical processes of PSII. PSII is a light-driven water:plastoquinone oxidoreductase, using light energy to abstract electrons from H(2)O, generating O(2) and a proton gradient subsequently used for ATP formation. The polypeptide is Photosystem II CP47 reaction center protein (Illicium oligandrum (Star anise)).